The sequence spans 160 residues: Cytochrome b6-f complex subunit 4 (160 aa).

The next 3 helical transmembrane spans lie at 36–56 (LLYI…GLAV), 95–115 (LLGI…PFIE), and 128–148 (IAMA…IGAC).

This sequence belongs to the cytochrome b family. PetD subfamily. As to quaternary structure, the 4 large subunits of the cytochrome b6-f complex are cytochrome b6, subunit IV (17 kDa polypeptide, PetD), cytochrome f and the Rieske protein, while the 4 small subunits are PetG, PetL, PetM and PetN. The complex functions as a dimer.

The protein resides in the cellular thylakoid membrane. Its function is as follows. Component of the cytochrome b6-f complex, which mediates electron transfer between photosystem II (PSII) and photosystem I (PSI), cyclic electron flow around PSI, and state transitions. The chain is Cytochrome b6-f complex subunit 4 from Prochlorococcus marinus (strain MIT 9313).